We begin with the raw amino-acid sequence, 148 residues long: Phospholipase A2-alpha (148 aa).

The signal sequence occupies residues 1 to 20; sequence MAAPIILFSFLLFFSVSVSA. Intrachain disulfides connect C38–C66, C42–C72, C47–C122, C59–C79, C78–C105, and C85–C98. Positions 58, 60, and 63 each coordinate Ca(2+). The active site involves H82. A Ca(2+)-binding site is contributed by D83.

It belongs to the phospholipase A2 family. In terms of assembly, interacts with MYB30. It depends on Ca(2+) as a cofactor. Ubiquitous but expressed at a low level.

It localises to the secreted. The protein resides in the golgi apparatus. Its subcellular location is the cytoplasmic vesicle. The protein localises to the nucleus. The enzyme catalyses a 1,2-diacyl-sn-glycero-3-phosphocholine + H2O = a 1-acyl-sn-glycero-3-phosphocholine + a fatty acid + H(+). Functionally, PA2 catalyzes the calcium-dependent hydrolysis of the 2-acyl groups in 3-sn-phosphoglycerides. Releases lysophospholipids (LPLs) and free fatty acids (FFAs) from membrane phospholipids in response to hormones and other external stimuli. Modulates the trafficking of PIN proteins to the plasma membrane. Negatively regulates MYB30 transcriptional activity and hypersensitive response control. The protein is Phospholipase A2-alpha of Arabidopsis thaliana (Mouse-ear cress).